The following is a 519-amino-acid chain: uncharacterized protein (519 aa).

13 consecutive transmembrane segments (helical) span residues 19–39, 42–62, 87–107, 128–148, 179–199, 220–240, 270–290, 311–331, 345–365, 386–406, 413–433, 475–495, and 496–516; these read FSSSVWSIVPALLAIILAIAT, VLVSLSAGIIIGSLMLSDWQI, MNIVLFLLLLGVLTALLTVSG, LLAASLVFVTFIDDYFHSLAV, VMMPVSSWGAYIITLIGGLLA, FYAIFSIIMVFFVAYFSFDIA, LILPILVLIIATVSMMIYTGA, VGTSLVVGGFCSIIISTLLII, WIVGIKSMSGAIAILFFAWTI, IPMQFLPVILFVLGAAMAFST, FGIMLPIAAAMAANAAPELLL, LPYAATVATATSIGYIVVGFT, and YSGLAGFAATAVSLIVIIFAV.

The protein resides in the cell membrane. This is an uncharacterized protein from Haemophilus influenzae (strain ATCC 51907 / DSM 11121 / KW20 / Rd).